We begin with the raw amino-acid sequence, 561 residues long: Dihydroxy-acid dehydratase 3 (561 aa).

Cys-50 serves as a coordination point for [2Fe-2S] cluster. A Mg(2+)-binding site is contributed by Asp-82. Cys-123 provides a ligand contact to [2Fe-2S] cluster. Mg(2+) contacts are provided by Asp-124 and Lys-125. The residue at position 125 (Lys-125) is an N6-carboxylysine. Cys-195 is a [2Fe-2S] cluster binding site. Glu-447 is a Mg(2+) binding site. Residue Ser-473 is the Proton acceptor of the active site.

It belongs to the IlvD/Edd family. As to quaternary structure, homodimer. The cofactor is [2Fe-2S] cluster. Requires Mg(2+) as cofactor.

The enzyme catalyses (2R)-2,3-dihydroxy-3-methylbutanoate = 3-methyl-2-oxobutanoate + H2O. The catalysed reaction is (2R,3R)-2,3-dihydroxy-3-methylpentanoate = (S)-3-methyl-2-oxopentanoate + H2O. The protein operates within amino-acid biosynthesis; L-isoleucine biosynthesis; L-isoleucine from 2-oxobutanoate: step 3/4. Its pathway is amino-acid biosynthesis; L-valine biosynthesis; L-valine from pyruvate: step 3/4. Its function is as follows. Functions in the biosynthesis of branched-chain amino acids. Catalyzes the dehydration of (2R,3R)-2,3-dihydroxy-3-methylpentanoate (2,3-dihydroxy-3-methylvalerate) into 2-oxo-3-methylpentanoate (2-oxo-3-methylvalerate) and of (2R)-2,3-dihydroxy-3-methylbutanoate (2,3-dihydroxyisovalerate) into 2-oxo-3-methylbutanoate (2-oxoisovalerate), the penultimate precursor to L-isoleucine and L-valine, respectively. This chain is Dihydroxy-acid dehydratase 3, found in Bordetella bronchiseptica (strain ATCC BAA-588 / NCTC 13252 / RB50) (Alcaligenes bronchisepticus).